Consider the following 313-residue polypeptide: Oxaloacetate tautomerase Fahd2a, mitochondrial (313 aa).

The transit peptide at 1 to 84 (MLGSGRRRLL…TALSVARRAL (84 aa)) directs the protein to the mitochondrion. Glutamate 159, glutamate 161, and aspartate 190 together coordinate Mg(2+). Lysine 202 carries the post-translational modification N6-acetyllysine; alternate. Lysine 202 carries the N6-succinyllysine; alternate modification. Lysine 233 carries the post-translational modification N6-acetyllysine.

Belongs to the FAH family. Mg(2+) serves as cofactor. It depends on Mn(2+) as a cofactor.

The protein resides in the mitochondrion. The enzyme catalyses oxaloacetate = enol-oxaloacetate. In terms of biological role, tautomerase that converts enol-oxaloacetate, a strong inhibitor of succinate dehydrogenase, to the physiological keto form of oxaloacetate. It is thereby required to maximize aerobic respiration efficiency by preventing succinate dehydrogenase inhibition. In Rattus norvegicus (Rat), this protein is Oxaloacetate tautomerase Fahd2a, mitochondrial.